Reading from the N-terminus, the 501-residue chain is Phytoene desaturase (lycopene-forming) (501 aa).

FAD is bound at residue 12 to 45 (IVIGAGFGGLALAIRLQSAGIATTLVEARDKPGG).

It belongs to the carotenoid/retinoid oxidoreductase family. FAD serves as cofactor.

It carries out the reaction 15-cis-phytoene + 4 A = all-trans-lycopene + 4 AH2. Its pathway is carotenoid biosynthesis; astaxanthin biosynthesis. Functionally, this enzyme converts phytoene into lycopene via the intermediaries of phytofluene, zeta-carotene and neurosporene by the introduction of four double bonds. The protein is Phytoene desaturase (lycopene-forming) (crtI) of Paracoccus sp. (strain N81106 / MBIC 01143) (Agrobacterium aurantiacum).